A 306-amino-acid chain; its full sequence is Curved DNA-binding protein (306 aa).

In terms of domain architecture, J spans D5–W69.

The protein resides in the cytoplasm. It localises to the nucleoid. Its function is as follows. DNA-binding protein that preferentially recognizes a curved DNA sequence. It is probably a functional analog of DnaJ; displays overlapping activities with DnaJ, but functions under different conditions, probably acting as a molecular chaperone in an adaptive response to environmental stresses other than heat shock. Lacks autonomous chaperone activity; binds native substrates and targets them for recognition by DnaK. Its activity is inhibited by the binding of CbpM. In Escherichia coli O17:K52:H18 (strain UMN026 / ExPEC), this protein is Curved DNA-binding protein.